A 150-amino-acid polypeptide reads, in one-letter code: Galactose-binding lectin (150 aa).

Residues His-16 and Gly-19 each contribute to the D-galactose site. Residue Asn-26 is glycosylated (N-linked (GlcNAc...) asparagine). D-galactose contacts are provided by residues Asn-27, 35-37 (DIH), His-64, and Gly-67. An N-linked (GlcNAc...) asparagine glycan is attached at Asn-74. D-galactose is bound by residues Glu-75, 83-85 (DRH), His-108, and Gly-111. An N-linked (GlcNAc...) asparagine glycan is attached at Asn-118. D-galactose is bound by residues Asn-119 and 127 to 129 (DKH).

As to quaternary structure, monomer in solution. Homodimer in solution. Exists as a monomer in solution when a low concentration (0.001 mg/ml) of it is present. Homodimers start to appear at a concentration of 0.01 mg/ml and tetramers at a concentration of 0.1 mg/ml. As to expression, highly expressed in mantle and to a lesser extent in muscle, hepatopancreas, gill and hemocytes.

Its activity is regulated as follows. Bacterial binding activity is inhibited by D-galactose. Hemagglutinating activity is independent of divalent cations Ca2(+) or Mg2(+). It is strongly inhibited by N-acetyl-D-galactosamine (GalNAc), D-galactose and D-talose, and to a lesser extent by melibiose and raffinose. Also inhibited by glycoprotein asialo-bovine submaxillary mucin (BSM). Not inhibited by D-glucose, D-fucose, D-galactitol, N-acetyl-D-glucosamine or lactose. Fungal binding activity is inhibited by D-galactose. Cytotoxic activity against Raji cell line is completely inhibited by galactose, melibiose and raffinose, but not by glucose or lactose. Galactose inhibits binding to laminin and BSM, but not to collagen, gelatin or fibronectin. Galactose-binding lectin. Binds both alpha and beta anomer of galactose (Gal), but has a stronger interaction with the glycans having alpha Gal at the non-reducing end and binds beta Gal weakly only in highly branched glycans. Has high affinity to Galalpha1-4Galbeta1-4GlcNAc. Binds N-acetyl-2-deoxy-2-amino-galactose (2-deoxy-GalNAc). Binds N-acetylgalactosamine (GalNAc). Binds porcine stomach mucin (PSM) with high affinity. Binds galactosamine. Binds laminin, bovine submaxillary mucin (BSM), fibronectin, type I collagen and gelatin with a decreasing affinity, respectively. Has hemagglutinating activity towards human type A erythrocytes. Also hemagglutinates human type 0, B and AB erythrocytes as well as rabbit and mouse erythrocytes. Agglutinates both Gram-positive and Gram-negative bacteria including B.subtilis ATCC 6633, S.aureus ATCC 21027 and E.coli 3254, respectively. No agglutination activity towards Gram-positive S.amurskyense CMM 3673. Has bacteriostatic activity on S.amurskyense CMM 3673, B.subtilis ATCC 6633, S.aureus ATCC 21027 and E.coli 3254. However, has no agglutination nor bacteriostatic activity on Gram-negative C.scophthalmum CIP 104199 or A.troitsensis KMM 3674. Inhibits growth of fungi from the genera Aspergillus, Penicillium, Trichoderma and st. Mycelia. Inhibits germination of spores and hyphal growth of them. Has dose-dependent cytotoxic effect on the human globotriaosylceramide (Gb3)-expressing Burkitt's lymphoma (Raji) cell line. Binds to Gb3 in these cells leading to activation of caspase-9/3 and PARP. Has dose-dependent cytotoxic effect on the Gb3-expressing human MCF-7 breast cancer cell line. No cytotoxic effect on myelogenous leukemia K562 cell line, which does not express Gb3. Activates immune responses in mice and increases cytokine production of TNF-alpha, IL-6 and MCP-1 in the serum and the peritoneal lavage of mice. Induces TNF-alpha and IL-6 secretion in mouse RAW264.7 macrophages, mouse bone marrow-derived macrophages, human THP-1 macrophages, human peripheral blood mononuclear cells (PBMCs) and human blood monocyte-derived macrophages. TNF-alpha production in macrophages could not be inhibited by GalNAc, GalN or Gal, indicating that induced cytokine production is separate from its sugar binding activity. Increases intracellular reactive oxygen species levels, expression and phosphorylation of protein kinases PKC alpha/delta, expression of COX-2 and NF-kappaB, and activates the MAPK pathway by increasing the phosphorylation of ERK1/2, JNK1/2 and p38 in mouse RAW264.7 macrophages. Induces endotoxin tolerance in lipopolysaccharide(LPS)-activated macrophages by down-regulating IRAK2 expression, reducing JNK1/2 phosphorylation and NF-kappaB activation. Can slightly increase the bactericidal activity of RAW264.7 macrophages. Has DNA-binding activity. Recognizes pathogen-associated molecular patterns (PAMPs) and binds to LPS from E.coli, but has only little binding to beta-1,3-glucan from E.gracilis and peptidoglycan from S.aureus. Activates secretion of TNF-alpha and IFN-gamma by the human peripheral blood cells (HPBCs). May be involved in innate immunity acting as an antibacterial and antifungal agent involved in the recognition and clearance of pathogens. In Crenomytilus grayanus (Gray mussel), this protein is Galactose-binding lectin.